The primary structure comprises 811 residues: DNA mismatch repair protein MutS (811 aa).

ATP is bound at residue 595 to 602 (GPNMSGKS).

The protein belongs to the DNA mismatch repair MutS family.

This protein is involved in the repair of mismatches in DNA. It is possible that it carries out the mismatch recognition step. This protein has a weak ATPase activity. The protein is DNA mismatch repair protein MutS of Pseudothermotoga lettingae (strain ATCC BAA-301 / DSM 14385 / NBRC 107922 / TMO) (Thermotoga lettingae).